An 85-amino-acid polypeptide reads, in one-letter code: Large ribosomal subunit protein bL27 (85 aa).

This sequence belongs to the bacterial ribosomal protein bL27 family.

This Ruthia magnifica subsp. Calyptogena magnifica protein is Large ribosomal subunit protein bL27.